Consider the following 806-residue polypeptide: Zygotic DNA replication licensing factor mcm3 (806 aa).

Residues 295–502 form the MCM domain; sequence VFEQLSRSLA…HDREISDHVL (208 aa). 345–352 is an ATP binding site; that stretch reads GDPSVAKS. Residues 477-480 carry the Arginine finger motif; sequence SRFD. Positions 662–738 are disordered; sequence KKRRRREGES…TDSSAKPGLS (77 aa). Residues 693–702 show a composition bias toward basic and acidic residues; sequence AQDGESHDPY.

The protein belongs to the MCM family. In terms of assembly, component of the mcm2-7 complex (RLF-M). The complex forms a toroidal hexameric ring with the proposed subunit order mcm2-mcm6-mcm4-mcm7-mcm3-mcm5. Begins to associate with zmcm6 into mcm complexes at the neurula stage. Component of the CMG helicase complex, composed of the mcm2-7 complex, the GINS complex and cdc45.

It is found in the nucleus. The protein resides in the chromosome. It carries out the reaction ATP + H2O = ADP + phosphate + H(+). In terms of biological role, acts as a component of the mcm2-7 complex (mcm complex) which is the putative replicative helicase essential for 'once per cell cycle' DNA replication initiation and elongation in eukaryotic cells. The active ATPase sites in the mcm2-7 ring are formed through the interaction surfaces of two neighboring subunits such that a critical structure of a conserved arginine finger motif is provided in trans relative to the ATP-binding site of the Walker A box of the adjacent subunit. The six ATPase active sites, however, are likely to contribute differentially to the complex helicase activity. The existence of maternal and zygotic forms of mcm3 and mcm6 suggests that specific forms of mcm2-7 complexes may be used during different stages of development. In Xenopus laevis (African clawed frog), this protein is Zygotic DNA replication licensing factor mcm3.